Consider the following 367-residue polypeptide: Ferrochelatase (367 aa).

Fe cation-binding residues include His213 and Glu294.

The protein belongs to the ferrochelatase family.

It localises to the cytoplasm. The enzyme catalyses heme b + 2 H(+) = protoporphyrin IX + Fe(2+). The protein operates within porphyrin-containing compound metabolism; protoheme biosynthesis; protoheme from protoporphyrin-IX: step 1/1. Catalyzes the ferrous insertion into protoporphyrin IX. This Polaromonas sp. (strain JS666 / ATCC BAA-500) protein is Ferrochelatase.